Here is a 1052-residue protein sequence, read N- to C-terminus: ATP-dependent DNA helicase MPH1 (1052 aa).

In terms of domain architecture, Helicase ATP-binding spans 89–256 (IVRKGLLQNI…EVVNNLNISK (168 aa)). Position 102 to 109 (102 to 109 (IPTGMGKT)) interacts with ATP. Residues 204–207 (DEAH) carry the DEAH box motif. The Helicase C-terminal domain occupies 432 to 649 (ELTQFFYENP…HLVQYRKSDR (218 aa)). 4 disordered regions span residues 495–550 (HGPK…NQKQ), 798–832 (IGDT…DLPL), 869–898 (SKRQ…QPEV), and 1002–1052 (HTVS…DSDF). Positions 503–532 (SDREKRLEEERRMDEEKKQAALQEKLERTS) are enriched in basic and acidic residues. Residues 534–549 (RTGSSEEAQLSGMNQK) show a composition bias toward polar residues. Composition is skewed to low complexity over residues 875–898 (QPEV…QPEV) and 1005–1028 (SQSQ…QQAS). Basic and acidic residues predominate over residues 1029-1040 (QKDRSSQDKDLT). Over residues 1043 to 1052 (ELEDLLDSDF) the composition is skewed to acidic residues.

It belongs to the DEAD box helicase family. DEAH subfamily. FANCM sub-subfamily. Interacts with the MHF histone-fold complex to form the FANCM-MHF complex.

It is found in the nucleus. The catalysed reaction is ATP + H2O = ADP + phosphate + H(+). Functionally, ATP-dependent DNA helicase involved in DNA damage repair by homologous recombination and in genome maintenance. Capable of unwinding D-loops. Plays a role in limiting crossover recombinants during mitotic DNA double-strand break (DSB) repair. Component of a FANCM-MHF complex which promotes gene conversion at blocked replication forks, probably by reversal of the stalled fork. This is ATP-dependent DNA helicase MPH1 from Candida glabrata (strain ATCC 2001 / BCRC 20586 / JCM 3761 / NBRC 0622 / NRRL Y-65 / CBS 138) (Yeast).